The chain runs to 883 residues: Phosphoenolpyruvate carboxylase (883 aa).

Active-site residues include His138 and Lys546.

It belongs to the PEPCase type 1 family. Homotetramer. Mg(2+) serves as cofactor.

It carries out the reaction oxaloacetate + phosphate = phosphoenolpyruvate + hydrogencarbonate. Its activity is regulated as follows. The enzyme has distinct binding sites for each of the allosteric effectors such as acetyl-CoA, fructose 1,6-bisphosphate, guanosine 3'-diphosphate 5'-diphosphate, long chain fatty acids, and L-aspartate. Its function is as follows. Forms oxaloacetate, a four-carbon dicarboxylic acid source for the tricarboxylic acid cycle. The sequence is that of Phosphoenolpyruvate carboxylase (ppc) from Salmonella typhi.